The sequence spans 103 residues: Histone H4 (103 aa).

Residues 1–14 (MSGRGKGGKGLGKG) show a composition bias toward gly residues. Residues 1 to 20 (MSGRGKGGKGLGKGGAKRHR) are disordered. K6 bears the N6-acetyl-N6-methyllysine; alternate mark. 3 positions are modified to N6-methyllysine; alternate: K6, K9, and K13. K13 is modified (N6-acetyl-N6-methyllysine; alternate). The DNA-binding element occupies 17-21 (KRHRK). Residue K92 is modified to N6-glutaryllysine.

This sequence belongs to the histone H4 family. As to quaternary structure, the nucleosome is a histone octamer containing two molecules each of H2A, H2B, H3 and H4 assembled in one H3-H4 heterotetramer and two H2A-H2B heterodimers. The octamer wraps approximately 147 bp of DNA. Glutarylation at Lys-92 (H4K91glu) destabilizes nucleosomes by promoting dissociation of the H2A-H2B dimers from nucleosomes.

It localises to the nucleus. The protein localises to the chromosome. In terms of biological role, core component of nucleosome. Nucleosomes wrap and compact DNA into chromatin, limiting DNA accessibility to the cellular machineries which require DNA as a template. Histones thereby play a central role in transcription regulation, DNA repair, DNA replication and chromosomal stability. DNA accessibility is regulated via a complex set of post-translational modifications of histones, also called histone code, and nucleosome remodeling. The sequence is that of Histone H4 (HHF1) from Mycosarcoma maydis (Corn smut fungus).